We begin with the raw amino-acid sequence, 180 residues long: ATP synthase subunit delta (180 aa).

The protein belongs to the ATPase delta chain family. As to quaternary structure, F-type ATPases have 2 components, F(1) - the catalytic core - and F(0) - the membrane proton channel. F(1) has five subunits: alpha(3), beta(3), gamma(1), delta(1), epsilon(1). F(0) has three main subunits: a(1), b(2) and c(10-14). The alpha and beta chains form an alternating ring which encloses part of the gamma chain. F(1) is attached to F(0) by a central stalk formed by the gamma and epsilon chains, while a peripheral stalk is formed by the delta and b chains.

It is found in the cell membrane. Its function is as follows. F(1)F(0) ATP synthase produces ATP from ADP in the presence of a proton or sodium gradient. F-type ATPases consist of two structural domains, F(1) containing the extramembraneous catalytic core and F(0) containing the membrane proton channel, linked together by a central stalk and a peripheral stalk. During catalysis, ATP synthesis in the catalytic domain of F(1) is coupled via a rotary mechanism of the central stalk subunits to proton translocation. Functionally, this protein is part of the stalk that links CF(0) to CF(1). It either transmits conformational changes from CF(0) to CF(1) or is implicated in proton conduction. This Enterococcus faecalis (strain ATCC 700802 / V583) protein is ATP synthase subunit delta.